Consider the following 518-residue polypeptide: Retinal dehydrogenase 2 (518 aa).

Position 168 is a phosphotyrosine (Tyr168). NAD(+) is bound by residues 184 to 186 (IPW), 210 to 213 (KPAE), and 264 to 266 (STE). The Proton acceptor role is filled by Glu286. The active-site Nucleophile is Cys320. At Ser351 the chain carries Phosphoserine. Residues 366 to 370 (KQYNK) and Glu417 contribute to the NAD(+) site.

The protein belongs to the aldehyde dehydrogenase family. As to quaternary structure, homotetramer.

The protein resides in the cytoplasm. It carries out the reaction retinal + NAD(+) + H2O = retinoate + NADH + 2 H(+). The catalysed reaction is all-trans-retinal + NAD(+) + H2O = all-trans-retinoate + NADH + 2 H(+). It catalyses the reaction all-trans-13,14-dihydroretinal + NAD(+) + H2O = all-trans-13,14-dihydroretinoate + NADH + 2 H(+). Its pathway is cofactor metabolism; retinol metabolism. Catalyzes the NAD-dependent oxidation of aldehyde substrates, such as all-trans-retinal and all-trans-13,14-dihydroretinal, to their corresponding carboxylic acids, all-trans-retinoate and all-trans-13,14-dihydroretinoate, respectively. Retinoate signaling is critical for the transcriptional control of many genes, for instance it is crucial for initiation of meiosis in both male and female. Recognizes retinal as substrate, both in its free form and when bound to cellular retinol-binding protein. Lacks activity with benzaldehyde, acetaldehyde and octanal. Displays complete lack of activity with citral. This Mus musculus (Mouse) protein is Retinal dehydrogenase 2 (Aldh1a2).